A 417-amino-acid polypeptide reads, in one-letter code: UPF0597 protein FMG_0209 (417 aa).

Belongs to the UPF0597 family.

In Finegoldia magna (strain ATCC 29328 / DSM 20472 / WAL 2508) (Peptostreptococcus magnus), this protein is UPF0597 protein FMG_0209.